Here is a 525-residue protein sequence, read N- to C-terminus: uncharacterized protein (525 aa).

The signal sequence occupies residues 1 to 21; it reads MLECLSALLVLFAGGGGSVLA. Topologically, residues 22-448 are extracellular; that stretch reads AVQSKTVADP…ISAASQLDER (427 aa). The interval 242–264 is disordered; it reads KVSSENCSKDTDDKSGSKKERNT. A helical membrane pass occupies residues 449–469; it reads IFIFTAITVSITTLMMLGFSY. The Cytoplasmic segment spans residues 470–525; it reads RSRVSFRDHSIDDSDDDNDWSDDEVEFDEEYFYSLPVSIPEKGISLDKMAQQLGVE.

The protein resides in the membrane. This is an uncharacterized protein from Saccharomyces cerevisiae (strain RM11-1a) (Baker's yeast).